A 292-amino-acid polypeptide reads, in one-letter code: Mycothiol acetyltransferase (292 aa).

N-acetyltransferase domains follow at residues 13-168 and 159-292; these read ALDR…KWLQ and KSVA…VYEK. E40 serves as a coordination point for 1D-myo-inositol 2-(L-cysteinylamino)-2-deoxy-alpha-D-glucopyranoside. 77–79 provides a ligand contact to acetyl-CoA; that stretch reads LAV. Residues E179, K218, and E226 each contribute to the 1D-myo-inositol 2-(L-cysteinylamino)-2-deoxy-alpha-D-glucopyranoside site. Acetyl-CoA is bound by residues 230–232 and 237–243; these read VGL and RGRGLGD. Residue Y264 coordinates 1D-myo-inositol 2-(L-cysteinylamino)-2-deoxy-alpha-D-glucopyranoside.

Belongs to the acetyltransferase family. MshD subfamily. In terms of assembly, monomer.

The enzyme catalyses 1D-myo-inositol 2-(L-cysteinylamino)-2-deoxy-alpha-D-glucopyranoside + acetyl-CoA = mycothiol + CoA + H(+). In terms of biological role, catalyzes the transfer of acetyl from acetyl-CoA to desacetylmycothiol (Cys-GlcN-Ins) to form mycothiol. This chain is Mycothiol acetyltransferase, found in Corynebacterium glutamicum (strain ATCC 13032 / DSM 20300 / JCM 1318 / BCRC 11384 / CCUG 27702 / LMG 3730 / NBRC 12168 / NCIMB 10025 / NRRL B-2784 / 534).